A 251-amino-acid chain; its full sequence is Hydroxyacylglutathione hydrolase (251 aa).

Positions 53, 55, 57, 58, 110, 127, and 165 each coordinate Zn(2+).

The protein belongs to the metallo-beta-lactamase superfamily. Glyoxalase II family. As to quaternary structure, monomer. Zn(2+) is required as a cofactor.

It carries out the reaction an S-(2-hydroxyacyl)glutathione + H2O = a 2-hydroxy carboxylate + glutathione + H(+). Its pathway is secondary metabolite metabolism; methylglyoxal degradation; (R)-lactate from methylglyoxal: step 2/2. Functionally, thiolesterase that catalyzes the hydrolysis of S-D-lactoyl-glutathione to form glutathione and D-lactic acid. In Salmonella gallinarum (strain 287/91 / NCTC 13346), this protein is Hydroxyacylglutathione hydrolase.